The sequence spans 512 residues: Tyrosine decarboxylase (512 aa).

Proline 100, histidine 205, and histidine 320 together coordinate L-tyrosine. Lysine 321 is modified (N6-(pyridoxal phosphate)lysine). Tyrosine 350 lines the L-tyrosine pocket.

Belongs to the group II decarboxylase family. In terms of assembly, homodimer. Requires pyridoxal 5'-phosphate as cofactor. In terms of tissue distribution, mainly expressed in roots, stems and capsule walls.

The catalysed reaction is L-tyrosine + H(+) = tyramine + CO2. In terms of biological role, tyrosine decarboxylase that converts tyrosine into tyramine, a precursor of isoquinoline alkaloids and various amides. The polypeptide is Tyrosine decarboxylase (Papaver somniferum (Opium poppy)).